The sequence spans 370 residues: NADH-quinone oxidoreductase subunit D (370 aa).

The protein belongs to the complex I 49 kDa subunit family. NDH-1 is composed of 14 different subunits. Subunits NuoB, C, D, E, F, and G constitute the peripheral sector of the complex.

The protein localises to the cell membrane. It carries out the reaction a quinone + NADH + 5 H(+)(in) = a quinol + NAD(+) + 4 H(+)(out). In terms of biological role, NDH-1 shuttles electrons from NADH, via FMN and iron-sulfur (Fe-S) centers, to quinones in the respiratory chain. The immediate electron acceptor for the enzyme in this species is believed to be a menaquinone. Couples the redox reaction to proton translocation (for every two electrons transferred, four hydrogen ions are translocated across the cytoplasmic membrane), and thus conserves the redox energy in a proton gradient. The chain is NADH-quinone oxidoreductase subunit D from Desulfitobacterium hafniense (strain Y51).